A 110-amino-acid polypeptide reads, in one-letter code: UPF0122 protein lmo1802 (110 aa).

This sequence belongs to the UPF0122 family.

Its function is as follows. Might take part in the signal recognition particle (SRP) pathway. This is inferred from the conservation of its genetic proximity to ftsY/ffh. May be a regulatory protein. The sequence is that of UPF0122 protein lmo1802 from Listeria monocytogenes serovar 1/2a (strain ATCC BAA-679 / EGD-e).